A 387-amino-acid polypeptide reads, in one-letter code: Galactokinase (387 aa).

33–36 (EHTD) provides a ligand contact to substrate. Residues S67 and 124 to 130 (GAGLSSS) contribute to the ATP site. Residues S130 and E162 each contribute to the Mg(2+) site. D174 functions as the Proton acceptor in the catalytic mechanism. Y224 provides a ligand contact to substrate.

The protein belongs to the GHMP kinase family. GalK subfamily.

It localises to the cytoplasm. It catalyses the reaction alpha-D-galactose + ATP = alpha-D-galactose 1-phosphate + ADP + H(+). The protein operates within carbohydrate metabolism; galactose metabolism. Functionally, catalyzes the transfer of the gamma-phosphate of ATP to D-galactose to form alpha-D-galactose-1-phosphate (Gal-1-P). The polypeptide is Galactokinase (Lactiplantibacillus plantarum (strain ATCC BAA-793 / NCIMB 8826 / WCFS1) (Lactobacillus plantarum)).